Consider the following 225-residue polypeptide: Ribose-5-phosphate isomerase A (225 aa).

Substrate-binding positions include 33-36 (TGST), 86-89 (DGAD), and 99-102 (KGGG). E108 serves as the catalytic Proton acceptor. K126 contacts substrate.

It belongs to the ribose 5-phosphate isomerase family. Homodimer.

It catalyses the reaction aldehydo-D-ribose 5-phosphate = D-ribulose 5-phosphate. It participates in carbohydrate degradation; pentose phosphate pathway; D-ribose 5-phosphate from D-ribulose 5-phosphate (non-oxidative stage): step 1/1. Catalyzes the reversible conversion of ribose-5-phosphate to ribulose 5-phosphate. This chain is Ribose-5-phosphate isomerase A, found in Bordetella petrii (strain ATCC BAA-461 / DSM 12804 / CCUG 43448).